An 87-amino-acid polypeptide reads, in one-letter code: MALLEFFRPQKKATANIAKERLQIIVAERRNGGPAPSYLPQLKEDILKVISKYVEVNPDMVTVSLEQKEEDLSVLELNVTLPDEDDH.

The protein belongs to the MinE family.

Prevents the cell division inhibition by proteins MinC and MinD at internal division sites while permitting inhibition at polar sites. This ensures cell division at the proper site by restricting the formation of a division septum at the midpoint of the long axis of the cell. The polypeptide is Cell division topological specificity factor (Aliivibrio fischeri (strain ATCC 700601 / ES114) (Vibrio fischeri)).